A 420-amino-acid chain; its full sequence is MQSWPTPEVPALAGTPVPLELFDTADQEVRLVETPPAGSDTPVGMYVCGITPYDSTHLGHAATYLAFDLIYRILLDNDHDVHYVQNITDVDDPLFERAARDGVDWRDLGTSQINLFRSDMEALSIIPPKDYIGAIESIDEVIEMVKTLLDEGAAYIVEDAEYPDVYASINATDKFGYESNYDAATMAEFFAERGGDPDRPGKKNPMDALLWRAAREGEPSWESPFGAGRPGWHIECSAIATNRLGHSFDIQGGGSDLIFPHHEFSAAHAEAAHGVERMAKHYVHAGMISQDGVKMSKSLGNLEFVSRLTAAGHEPGAIRLGVFANHYRGNRDWNAESLATAEQRLATWREAARAATNREDAIAVVEQLRAHLSADLDTPGALAAVDNWAAGIDTTAGSKEFTEVGNIVVAAIDALLGVQL.

Residue C48 coordinates Zn(2+). L-cysteinyl-5'-AMP contacts are provided by residues 48 to 51 (CGIT), T63, and 86 to 88 (NIT). The short motif at 50-60 (ITPYDSTHLGH) is the 'HIGH' region element. Positions 192 to 197 (ERGGDP) match the 'ERGGDP' region motif. W232 is a binding site for L-cysteinyl-5'-AMP. C236 contacts Zn(2+). 254–256 (GSD) is an L-cysteinyl-5'-AMP binding site. Residue H261 coordinates Zn(2+). I288 is a binding site for L-cysteinyl-5'-AMP. The short motif at 294–298 (KMSKS) is the 'KMSKS' region element.

Belongs to the class-I aminoacyl-tRNA synthetase family. MshC subfamily. In terms of assembly, monomer. It depends on Zn(2+) as a cofactor.

It carries out the reaction 1D-myo-inositol 2-amino-2-deoxy-alpha-D-glucopyranoside + L-cysteine + ATP = 1D-myo-inositol 2-(L-cysteinylamino)-2-deoxy-alpha-D-glucopyranoside + AMP + diphosphate + H(+). Catalyzes the ATP-dependent condensation of GlcN-Ins and L-cysteine to form L-Cys-GlcN-Ins. This Corynebacterium glutamicum (strain R) protein is L-cysteine:1D-myo-inositol 2-amino-2-deoxy-alpha-D-glucopyranoside ligase.